Reading from the N-terminus, the 297-residue chain is NAC domain-containing protein 72 (297 aa).

Residues 14 to 162 (LPPGFRFYPT…DWVLCRIYKK (149 aa)) enclose the NAC domain. A DNA-binding region spans residues 111 to 168 (VGIKKALVFYAGKAPKGTKTNWIMHEYRLIEHSRSHGSSKLDDWVLCRIYKKTSGSQR). 2 disordered regions span residues 168–195 (RQAV…SQLD) and 259–278 (GEAE…LTQS). Residues 266–277 (VNRQQNSSGLTQ) are compositionally biased toward polar residues.

As to expression, expressed in leaves and in root pericycle and epidermis.

The protein localises to the nucleus. In terms of biological role, transcription factors that bind specifically to the 5'-CATGTG-3' motif and with bipartite regions with 5'-CGTr-3' and 5'-YACG-3' as cores. Involved in the regulation of metabolic reprogramming during senescence by promoting the chloroplast protein degradation and the catabolism of lysine, phytol and free fatty acids via the induction of CV, LKR/SDH and PES1 expression. Also triggers the degradation of starch and the accumulation of mono- and disaccharides during senescence by enhancing the expression of AMY1, SFP1 and SWEET15. This chain is NAC domain-containing protein 72, found in Arabidopsis thaliana (Mouse-ear cress).